The following is a 320-amino-acid chain: Fe-S cluster assembly protein dre2 (320 aa).

Residues 1 to 130 (MAKQTLLLSP…KPDIEEMQAV (130 aa)) are N-terminal SAM-like domain. Residues 131-213 (PLRLGRKNDH…DNLLDDSELS (83 aa)) are linker. Positions 141-166 (LAGAPSLEGSAAEHPFPPEVSEGKTA) are disordered. Residues Cys-222, Cys-233, Cys-236, and Cys-238 each coordinate [2Fe-2S] cluster. Residues 222 to 238 (CRPKAGKRRRACKDCTC) are fe-S binding site A. [4Fe-4S] cluster is bound by residues Cys-283, Cys-286, Cys-294, and Cys-297. 2 consecutive short sequence motifs (cx2C motif) follow at residues 283-286 (CGNC) and 294-297 (CEGC). Residues 283 to 297 (CGNCSLGDAFRCEGC) are fe-S binding site B.

This sequence belongs to the anamorsin family. As to quaternary structure, monomer. Interacts with tah18. Interacts with mia40. [2Fe-2S] cluster is required as a cofactor. [4Fe-4S] cluster serves as cofactor.

The protein localises to the cytoplasm. It localises to the mitochondrion intermembrane space. Component of the cytosolic iron-sulfur (Fe-S) protein assembly (CIA) machinery required for the maturation of extramitochondrial Fe-S proteins. Part of an electron transfer chain functioning in an early step of cytosolic Fe-S biogenesis, facilitating the de novo assembly of a [4Fe-4S] cluster on the scaffold complex cfd1-nbp35. Electrons are transferred to dre2 from NADPH via the FAD- and FMN-containing protein tah18. Tah18-dre2 are also required for the assembly of the diferric tyrosyl radical cofactor of ribonucleotide reductase (RNR), probably by providing electrons for reduction during radical cofactor maturation in the catalytic small subunit rnr2. The sequence is that of Fe-S cluster assembly protein dre2 from Neosartorya fischeri (strain ATCC 1020 / DSM 3700 / CBS 544.65 / FGSC A1164 / JCM 1740 / NRRL 181 / WB 181) (Aspergillus fischerianus).